The following is a 189-amino-acid chain: MKTLFKSLKITLVFCVFFSVFYILILWLFAQVAGPNKGNAEVATLDGKVVGAANVGQMFTKDIYFWGRPSCAGDGYDASSSSGSNKGPTNPEYLAEVEARIDTFLVHHPYLSRKDVPAEMVTASASGLDPNITPQCAYVQVKRVAQARGLTENQVKEIVDQSVEKPLLGIFGTEKINVLKLNIALEENK.

A helical transmembrane segment spans residues 10–30; the sequence is ITLVFCVFFSVFYILILWLFA.

Belongs to the KdpC family. In terms of assembly, the system is composed of three essential subunits: KdpA, KdpB and KdpC.

The protein localises to the cell inner membrane. Its function is as follows. Part of the high-affinity ATP-driven potassium transport (or Kdp) system, which catalyzes the hydrolysis of ATP coupled with the electrogenic transport of potassium into the cytoplasm. This subunit acts as a catalytic chaperone that increases the ATP-binding affinity of the ATP-hydrolyzing subunit KdpB by the formation of a transient KdpB/KdpC/ATP ternary complex. The protein is Potassium-transporting ATPase KdpC subunit of Bacteroides thetaiotaomicron (strain ATCC 29148 / DSM 2079 / JCM 5827 / CCUG 10774 / NCTC 10582 / VPI-5482 / E50).